Reading from the N-terminus, the 427-residue chain is Large ribosomal subunit protein uL4 (427 aa).

A2 carries the N-acetylalanine modification. Position 14 is an N6-acetyllysine (K14). At R97 the chain carries Omega-N-methylarginine. The residue at position 106 (K106) is an N6-acetyllysine. K239 participates in a covalent cross-link: Glycyl lysine isopeptide (Lys-Gly) (interchain with G-Cter in SUMO2). An N6-acetyllysine modification is found at K259. The residue at position 266 (T266) is a Phosphothreonine. 2 positions are modified to phosphoserine: S290 and S295. Citrulline is present on R300. K327 is covalently cross-linked (Glycyl lysine isopeptide (Lys-Gly) (interchain with G-Cter in SUMO2)). 2 positions are modified to N6-acetyllysine: K333 and K353. An N6-acetyllysine; alternate modification is found at K364. K364 participates in a covalent cross-link: Glycyl lysine isopeptide (Lys-Gly) (interchain with G-Cter in SUMO1); alternate. Phosphoserine is present on S365. The segment at 369–427 is disordered; that stretch reads AAVAGKKPVVGKKGKKVAVGVKKQKKPLVGKKAAATKKPAPEKKSTEKKPTTEEKKPAA. Residues 377–397 show a composition bias toward basic residues; sequence VVGKKGKKVAVGVKKQKKPLV. Residues 407 to 427 are compositionally biased toward basic and acidic residues; the sequence is PAPEKKSTEKKPTTEEKKPAA.

Belongs to the universal ribosomal protein uL4 family. In terms of assembly, component of the large ribosomal subunit. May bind IPO9 with low affinity. Interacts with RBM3. In terms of processing, citrullinated by PADI4.

It localises to the cytoplasm. Component of the large ribosomal subunit. The ribosome is a large ribonucleoprotein complex responsible for the synthesis of proteins in the cell. The chain is Large ribosomal subunit protein uL4 (RPL4) from Macaca fascicularis (Crab-eating macaque).